We begin with the raw amino-acid sequence, 316 residues long: uncharacterized protein (316 aa).

The protein belongs to the chlamydial CPn_0441/CT_007/TC_0275 family.

This is an uncharacterized protein from Chlamydia trachomatis serovar D (strain ATCC VR-885 / DSM 19411 / UW-3/Cx).